Consider the following 348-residue polypeptide: MRAPASSAASNRPGPSNHPTPRWNSKQFFLTYPHCNLTPSELMKELFSRLTEKIPGYIKVSQEFHKDGDPHLHVLIQLNTKLCTRNPKFFDVQGFHPNIQPVRDAEKVFGYISKTNGDSDEMGELQLRIKKPEKPTRDQRMAMIIASSTNRNEYLSMVRKEFPFDWAIRLQQFEYSAAALFTEPPPVYQSPFPNEQIVCPPELVDIIDQEWNQQPNGPRRPRSIYICGPSRTGKTTWARNIGRHNYYNSTVDFTHYDKDAIYNVIDDVPFKFLPQWKALVGAQRDYIVNPKYGKKKKIPGGIPSIILTNDDEDWIKDMKPAQVEYLHANAHVHYMYEGQKFYVLPAEE.

Residues 1 to 17 (MRAPASSAASNRPGPSN) show a composition bias toward low complexity. Positions 1 to 22 (MRAPASSAASNRPGPSNHPTPR) are disordered. The CRESS-DNA virus Rep endonuclease domain occupies 22 to 125 (RWNSKQFFLT…NGDSDEMGEL (104 aa)). The RCR-1 motif lies at 29–32 (FLTY). Residues Glu-63, His-71, and His-73 each coordinate a divalent metal cation. An RCR-2 motif is present at residues 71-73 (HLH). The For DNA cleavage activity role is filled by Tyr-111. The short motif at 111-114 (YISK) is the RCR-3 element. The segment at 176 to 188 (SAAALFTEPPPVY) is oligomerization. 228-235 (GPSRTGKT) contributes to the ATP binding site. Residues 251–269 (VDFTHYDKDAIYNVIDDVP) are transactivation. The short motif at 291–301 (KYGKKKKIPGG) is the Nuclear localization signal element.

This sequence belongs to the geminiviridae Rep protein family. As to quaternary structure, homooligomer. Rep binds to repeated DNA motifs (iterons). Forms the O-complex, which is a Rep-DNA complex involved in the initiation of RCR. Part of the C- and V-complexes which are RepA-Rep-DNA complexes involved in the c-sense and v-sense transcription. Mg(2+) serves as cofactor. The cofactor is Mn(2+).

It is found in the host nucleus. Functionally, essential for the replication of viral ssDNA. The closed circular ssDNA genome is first converted to a superhelical dsDNA. Rep binds a specific region at the genome origin of replication. It introduces an endonucleolytic nick within the conserved sequence 5'-TAATATTAC-3' in the intergenic region of the genome present in all geminiviruses, thereby initiating the rolling circle replication (RCR). Following cleavage, binds covalently to the 5'-phosphate of DNA as a tyrosyl ester. The cleavage gives rise to a free 3'-OH that serves as a primer for the cellular DNA polymerase. The polymerase synthesizes the (+) strand DNA by rolling circle mechanism. After one round of replication, a Rep-catalyzed nucleotidyl transfer reaction releases a circular single-stranded virus genome, thereby terminating the replication. Displays origin-specific DNA cleavage, nucleotidyl transferase, ATPase and helicase activities. Acts as an inhibitor of C-sense gene transcription. This chain is Replication-associated protein, found in Miscanthus streak virus (isolate 91) (MiSV).